Here is a 229-residue protein sequence, read N- to C-terminus: GTP cyclohydrolase 1 (229 aa).

The segment at 1-21 (MTLAKPGSGSQSRMDDKAHFK) is disordered. Residues Cys116, His119, and Cys187 each coordinate Zn(2+).

It belongs to the GTP cyclohydrolase I family. In terms of assembly, toroid-shaped homodecamer, composed of two pentamers of five dimers.

It carries out the reaction GTP + H2O = 7,8-dihydroneopterin 3'-triphosphate + formate + H(+). It functions in the pathway cofactor biosynthesis; 7,8-dihydroneopterin triphosphate biosynthesis; 7,8-dihydroneopterin triphosphate from GTP: step 1/1. This Synechococcus sp. (strain JA-2-3B'a(2-13)) (Cyanobacteria bacterium Yellowstone B-Prime) protein is GTP cyclohydrolase 1.